We begin with the raw amino-acid sequence, 106 residues long: Secreted RxLR effector protein 18 (106 aa).

The N-terminal stretch at 1–17 (MRGSTAMLLAAIALFSS) is a signal peptide. Residues 28–39 (RTLRSFEELEER) carry the RxLR-dEER motif.

It belongs to the RxLR effector family.

The protein resides in the secreted. The protein localises to the host cell. Functionally, effector that may act as a suppressor of cell death to interrupt plant immunity. I. The polypeptide is Secreted RxLR effector protein 18 (Plasmopara viticola (Downy mildew of grapevine)).